Here is a 367-residue protein sequence, read N- to C-terminus: Flagellin 2 (367 aa).

The protein belongs to the bacterial flagellin family.

The protein localises to the secreted. Its subcellular location is the bacterial flagellum. Functionally, flagellin is the subunit protein which polymerizes to form the filaments of bacterial flagella. The polypeptide is Flagellin 2 (fliC2) (Proteus mirabilis).